Consider the following 319-residue polypeptide: Coproporphyrin III ferrochelatase 2 (319 aa).

Fe-coproporphyrin III-binding positions include Tyr13, Arg30, 46 to 47 (RY), Ser54, and Tyr125. Fe(2+) is bound by residues His181 and Glu262.

Belongs to the ferrochelatase family.

It is found in the cytoplasm. The enzyme catalyses Fe-coproporphyrin III + 2 H(+) = coproporphyrin III + Fe(2+). Its pathway is porphyrin-containing compound metabolism; protoheme biosynthesis. Functionally, involved in coproporphyrin-dependent heme b biosynthesis. Catalyzes the insertion of ferrous iron into coproporphyrin III to form Fe-coproporphyrin III. The sequence is that of Coproporphyrin III ferrochelatase 2 from Bacillus cereus (strain ZK / E33L).